Consider the following 401-residue polypeptide: Probable sodium/metabolite cotransporter BASS5, chloroplastic (401 aa).

A chloroplast-targeting transit peptide spans 1–46 (MAPNAAVLVRPHIAGVHHLPTGRRLPRLAPPQAVSPPFSRQKGSVV). A run of 9 helical transmembrane segments spans residues 93–113 (TIIP…PPSF), 122–142 (APAL…KDFI), 159–179 (FIIK…IFNL), 185–205 (AGIM…ATFL), 215–235 (IVMT…LSYF), 247–267 (GMMS…LLLN), 273–293 (LCSA…ALCV), 299–319 (INIK…LFAF), and 372–392 (LVGV…FALV).

The protein belongs to the bile acid:sodium symporter (BASS) (TC 2.A.28) family.

Its subcellular location is the membrane. The protein resides in the plastid. It localises to the chloroplast envelope. May function as sodium-coupled metabolite transporter across the chloroplast envelope. The sequence is that of Probable sodium/metabolite cotransporter BASS5, chloroplastic (BASS5) from Oryza sativa subsp. indica (Rice).